Reading from the N-terminus, the 427-residue chain is D-inositol 3-phosphate glycosyltransferase 2 (427 aa).

His14 lines the 1D-myo-inositol 3-phosphate pocket. UDP-N-acetyl-alpha-D-glucosamine is bound by residues Gln20 to Pro21 and Gly28. Residues Asp25–Asn30, Lys83, Tyr116, Thr140, and Arg160 contribute to the 1D-myo-inositol 3-phosphate site. Residues Arg234, Lys239, and Val300 each contribute to the UDP-N-acetyl-alpha-D-glucosamine site. Residues Tyr309, Arg310, and Ala312 each contribute to the Mg(2+) site. The UDP-N-acetyl-alpha-D-glucosamine site is built by Glu322 and Glu330. Thr336 contributes to the Mg(2+) binding site.

The protein belongs to the glycosyltransferase group 1 family. MshA subfamily. Homodimer.

The enzyme catalyses 1D-myo-inositol 3-phosphate + UDP-N-acetyl-alpha-D-glucosamine = 1D-myo-inositol 2-acetamido-2-deoxy-alpha-D-glucopyranoside 3-phosphate + UDP + H(+). Functionally, catalyzes the transfer of a N-acetyl-glucosamine moiety to 1D-myo-inositol 3-phosphate to produce 1D-myo-inositol 2-acetamido-2-deoxy-glucopyranoside 3-phosphate in the mycothiol biosynthesis pathway. The protein is D-inositol 3-phosphate glycosyltransferase 2 of Catenulispora acidiphila (strain DSM 44928 / JCM 14897 / NBRC 102108 / NRRL B-24433 / ID139908).